The primary structure comprises 114 residues: SCP2 domain-containing protein YusD (114 aa).

An SCP2 domain is found at 21-101; the sequence is NASTLLITFQ…RALLKLEAIL (81 aa).

The sequence is that of SCP2 domain-containing protein YusD (yusD) from Bacillus subtilis (strain 168).